Here is a 268-residue protein sequence, read N- to C-terminus: NAC transcription factor 29 (268 aa).

An NAC domain is found at 9–161; it reads LPPGFRFHPT…EWVLCRIYKK (153 aa). The DNA-binding element occupies 106-167; that stretch reads VGVKKALVFY…IYKKRGASKL (62 aa).

In terms of tissue distribution, expressed in senescing leaves, petals and sepals.

The protein resides in the nucleus. In terms of biological role, transcription activator that binds to, and transactivates the promoter of the abscisic aldehyde oxidase AAO3. Promotes chlorophyll degradation in leaves by enhancing transcription of AAO3, which leads to increased levels of the senescence-inducing hormone abscisic acid (ABA). Involved in the control of dehydration in senescing leaves. Binds to the DNA sequence 5'-CACGTAAGT-3' of SAG113 promoter. SAG113 acts as a negative regulator of ABA signaling for stomatal closure in leaves, and controls water loss during leaf senescence. Transcription factor of the NAC family involved in senescence. May function in the transition between active cell division and cell expansion. Required for normal seed development and morphology. This is NAC transcription factor 29 (NAC029) from Arabidopsis thaliana (Mouse-ear cress).